A 296-amino-acid polypeptide reads, in one-letter code: NADH-cytochrome b5 reductase 2-A (296 aa).

Residues 15–35 (FVIGAPTIALCSYYYSSGAFL) traverse the membrane as a helical segment. In terms of domain architecture, FAD-binding FR-type spans 47-151 (NNWIDLPISR…KGPIPKWKWV (105 aa)). 154–189 (SFESITLIGGGTGITPLYQLIHAITKNPNDKTKIRL) lines the FAD pocket.

The protein belongs to the flavoprotein pyridine nucleotide cytochrome reductase family. The cofactor is FAD.

It is found in the mitochondrion outer membrane. It carries out the reaction 2 Fe(III)-[cytochrome b5] + NADH = 2 Fe(II)-[cytochrome b5] + NAD(+) + H(+). May mediate the reduction of outer membrane cytochrome b5. The polypeptide is NADH-cytochrome b5 reductase 2-A (MCR1A) (Vanderwaltozyma polyspora (strain ATCC 22028 / DSM 70294 / BCRC 21397 / CBS 2163 / NBRC 10782 / NRRL Y-8283 / UCD 57-17) (Kluyveromyces polysporus)).